The following is a 138-amino-acid chain: Gonadotropin subunit beta-2 (138 aa).

The first 21 residues, 1 to 21 (MPASSYFLLFFFMNFFSPAQS), serve as a signal peptide directing secretion. Intrachain disulfides connect C27-C75, C41-C90, C44-C128, C52-C106, C56-C108, and C111-C118. N31 carries an N-linked (GlcNAc...) asparagine glycan.

This sequence belongs to the glycoprotein hormones subunit beta family. As to quaternary structure, heterodimer of an alpha and a beta chain.

It localises to the secreted. Involved in gametogenesis and steroidogenesis. The polypeptide is Gonadotropin subunit beta-2 (cgbb) (Clarias gariepinus (North African catfish)).